The chain runs to 156 residues: Endoribonuclease YbeY (156 aa).

The Zn(2+) site is built by His122, His126, and His132.

Belongs to the endoribonuclease YbeY family. Zn(2+) serves as cofactor.

It localises to the cytoplasm. Functionally, single strand-specific metallo-endoribonuclease involved in late-stage 70S ribosome quality control and in maturation of the 3' terminus of the 16S rRNA. The sequence is that of Endoribonuclease YbeY from Moorella thermoacetica (strain ATCC 39073 / JCM 9320).